We begin with the raw amino-acid sequence, 374 residues long: DNA replication and repair protein RecF (374 aa).

An ATP-binding site is contributed by 30–37 (GPNAQGKT).

This sequence belongs to the RecF family.

It is found in the cytoplasm. The RecF protein is involved in DNA metabolism; it is required for DNA replication and normal SOS inducibility. RecF binds preferentially to single-stranded, linear DNA. It also seems to bind ATP. This chain is DNA replication and repair protein RecF, found in Lactobacillus gasseri (strain ATCC 33323 / DSM 20243 / BCRC 14619 / CIP 102991 / JCM 1131 / KCTC 3163 / NCIMB 11718 / NCTC 13722 / AM63).